A 751-amino-acid polypeptide reads, in one-letter code: MKYCKFCCKAVTGVKLIHVPKCAIKRKLWEQSLGCSLGENSQICDTHFNDSQWKAAPAKGQTFKRRRLNADAVPSKVIEPEPEKIKEGYTSGSTQTESCSLFNENKSLREKIRTLEYEMRRLEQQLRESQQLEESLRKIFTDTQIRILKNGGQRATFNSDDISTAICLHTAGPRAYNHLYKKGFPLPSRTTLYRWLSDVDIKRGCLDVVIDLMDSDGVDDADKLCVLAFDEMKVAAAFEYDSSADIVYEPSDYVQLAIVRGLKKSWKQPVFFDFNTRMDPDTLNNILRKLHRKGYLVVAIVSDLGTGNQKLWTELGISESKTWFSHPADDHLKIFVFSDTPHLIKLVRNHYVDSGLTINGKKLTKKTIQEALHLCNKSDLSILFKINENHINVRSLAKQKVKLATQLFSNTTASSIRRCYSLGYDIENATETADFFKLMNDWFDIFNSKLSTSNCIECSQPYGKQLDIQNDILNRMSEIMRTGILDKPKRLPFQKGIIVNNASLDGLYKYLQENFSMQYILTSRLNQDIVEHFFGSMRSRGGQFDHPTPLQFKYRLRKYIIGMTNLKECVNKNVIPDNSESWLNLDFSSKENENKSKDDEPVDDEPVDEMLSNIDFTEMDELTEDAMEYIAGYVIKKLRISDKVKENLTFTYVDEVSHGGLIKPSEKFQEKLKELECIFLHYTNNNNFEITNNVKEKLILAARNVDVDKQVKSFYFKIRIYFRIKYFNKKIEIKNQKQKLIGNSKLLKIKL.

A THAP-type zinc finger spans residues 1 to 77 (MKYCKFCCKA…LNADAVPSKV (77 aa)).

P-element transposase that specifically mediates transposition of P-elements. Mediates both; precise and imprecise excision. The polypeptide is Transposable element P transposase (Drosophila melanogaster (Fruit fly)).